Consider the following 274-residue polypeptide: NH(3)-dependent NAD(+) synthetase (274 aa).

46 to 53 (GISGGQDS) contacts ATP. Residue Asp52 coordinates Mg(2+). Arg140 serves as a coordination point for deamido-NAD(+). Residue Thr160 coordinates ATP. Glu165 is a Mg(2+) binding site. Lys173 and Asp180 together coordinate deamido-NAD(+). ATP-binding residues include Lys189 and Thr211. Deamido-NAD(+) is bound at residue 260 to 261 (HK).

It belongs to the NAD synthetase family. Homodimer.

It carries out the reaction deamido-NAD(+) + NH4(+) + ATP = AMP + diphosphate + NAD(+) + H(+). It participates in cofactor biosynthesis; NAD(+) biosynthesis; NAD(+) from deamido-NAD(+) (ammonia route): step 1/1. In terms of biological role, catalyzes the ATP-dependent amidation of deamido-NAD to form NAD. Uses ammonia as a nitrogen source. The polypeptide is NH(3)-dependent NAD(+) synthetase (Streptococcus pyogenes serotype M1).